A 452-amino-acid polypeptide reads, in one-letter code: Exodeoxyribonuclease 7 large subunit (452 aa).

It belongs to the XseA family. In terms of assembly, heterooligomer composed of large and small subunits.

The protein resides in the cytoplasm. The catalysed reaction is Exonucleolytic cleavage in either 5'- to 3'- or 3'- to 5'-direction to yield nucleoside 5'-phosphates.. In terms of biological role, bidirectionally degrades single-stranded DNA into large acid-insoluble oligonucleotides, which are then degraded further into small acid-soluble oligonucleotides. This Bacillus anthracis (strain A0248) protein is Exodeoxyribonuclease 7 large subunit.